The chain runs to 90 residues: Small ribosomal subunit protein uS15 (90 aa).

This sequence belongs to the universal ribosomal protein uS15 family. In terms of assembly, part of the 30S ribosomal subunit. Forms a bridge to the 50S subunit in the 70S ribosome, contacting the 23S rRNA.

Functionally, one of the primary rRNA binding proteins, it binds directly to 16S rRNA where it helps nucleate assembly of the platform of the 30S subunit by binding and bridging several RNA helices of the 16S rRNA. In terms of biological role, forms an intersubunit bridge (bridge B4) with the 23S rRNA of the 50S subunit in the ribosome. The polypeptide is Small ribosomal subunit protein uS15 (Aquifex aeolicus (strain VF5)).